Consider the following 233-residue polypeptide: Biosynthetic peptidoglycan transglycosylase (233 aa).

A helical transmembrane segment spans residues 7–27; it reads VFTWLAKLVLGLFFASILSVV.

The protein belongs to the glycosyltransferase 51 family.

The protein localises to the cell inner membrane. It catalyses the reaction [GlcNAc-(1-&gt;4)-Mur2Ac(oyl-L-Ala-gamma-D-Glu-L-Lys-D-Ala-D-Ala)](n)-di-trans,octa-cis-undecaprenyl diphosphate + beta-D-GlcNAc-(1-&gt;4)-Mur2Ac(oyl-L-Ala-gamma-D-Glu-L-Lys-D-Ala-D-Ala)-di-trans,octa-cis-undecaprenyl diphosphate = [GlcNAc-(1-&gt;4)-Mur2Ac(oyl-L-Ala-gamma-D-Glu-L-Lys-D-Ala-D-Ala)](n+1)-di-trans,octa-cis-undecaprenyl diphosphate + di-trans,octa-cis-undecaprenyl diphosphate + H(+). The protein operates within cell wall biogenesis; peptidoglycan biosynthesis. Functionally, peptidoglycan polymerase that catalyzes glycan chain elongation from lipid-linked precursors. The polypeptide is Biosynthetic peptidoglycan transglycosylase (Shewanella oneidensis (strain ATCC 700550 / JCM 31522 / CIP 106686 / LMG 19005 / NCIMB 14063 / MR-1)).